The following is a 57-amino-acid chain: Large ribosomal subunit protein eL37 (57 aa).

Zn(2+) contacts are provided by Cys-20, Cys-23, Cys-35, and Cys-38. The C4-type zinc-finger motif lies at 20–38; it reads CRRCGEKSYHKQKKVCASC.

Belongs to the eukaryotic ribosomal protein eL37 family. Requires Zn(2+) as cofactor.

Binds to the 23S rRNA. In Natronomonas pharaonis (strain ATCC 35678 / DSM 2160 / CIP 103997 / JCM 8858 / NBRC 14720 / NCIMB 2260 / Gabara) (Halobacterium pharaonis), this protein is Large ribosomal subunit protein eL37.